Reading from the N-terminus, the 279-residue chain is MSAVLLDGKALAAKKRDELKSEVTKLKERGITPGLAVILVGNDPASTVYVRSKQKACEQIGIYSVLKELPASTSEEELLTEIDRLNNDPTIHGILVQLPLPEQISEQAVIERISPAKDVDGFHPISVGRMMIGEDTFLPCTPFGVLVMLQEANVEIAGKHVVVVGRSNIVGKPVGQLMLNEHATVTYCHSRTKNLTEITKQADILIVAVGRARFIDASHVKEGAVVIDVGINRVDGKLCGDVDFESVREVASHLTPVPGGVGPMTITMLLANTIQAAKE.

Residues 165 to 167, serine 190, and isoleucine 231 contribute to the NADP(+) site; that span reads GRS.

This sequence belongs to the tetrahydrofolate dehydrogenase/cyclohydrolase family. In terms of assembly, homodimer.

The enzyme catalyses (6R)-5,10-methylene-5,6,7,8-tetrahydrofolate + NADP(+) = (6R)-5,10-methenyltetrahydrofolate + NADPH. It catalyses the reaction (6R)-5,10-methenyltetrahydrofolate + H2O = (6R)-10-formyltetrahydrofolate + H(+). It functions in the pathway one-carbon metabolism; tetrahydrofolate interconversion. Functionally, catalyzes the oxidation of 5,10-methylenetetrahydrofolate to 5,10-methenyltetrahydrofolate and then the hydrolysis of 5,10-methenyltetrahydrofolate to 10-formyltetrahydrofolate. This is Bifunctional protein FolD from Halalkalibacterium halodurans (strain ATCC BAA-125 / DSM 18197 / FERM 7344 / JCM 9153 / C-125) (Bacillus halodurans).